Reading from the N-terminus, the 266-residue chain is GTP-binding protein Rhes (266 aa).

26-33 contributes to the GTP binding site; that stretch reads GASRVGKS. The Effector region signature appears at 48–56; sequence YTPTIEDFH. GTP-binding positions include 73-77 and 140-143; these read DTSGN and NKND. The segment at 189–235 is interaction with GNB1, GNB2 and GNB3; that stretch reads MAKLPHEMSPALHHKISVQYGDAFHPRPFCMRRTKVAGAYGMVSPFA. C263 bears the Cysteine methyl ester mark. Residue C263 is the site of S-farnesyl cysteine attachment. The propeptide at 264–266 is removed in mature form; that stretch reads SIQ.

This sequence belongs to the small GTPase superfamily. RasD family. As to quaternary structure, monomer (Potential). Interacts with PIK3CA and UBE2I. Interacts with GNB1, GNB2 and GNB3. Post-translationally, farnesylated. Farnesylation is required for membrane targeting. As to expression, highly expressed in brain; prominently in the striatum and weakly in kidney, thyroid, lung, heart and testis. Not expressed in liver. Expressed in pancreatic cell lines and in a embryonic stem cell line.

It is found in the cell membrane. Its function is as follows. GTPase signaling protein that binds to and hydrolyzes GTP. Regulates signaling pathways involving G-proteins-coupled receptor and heterotrimeric proteins such as GNB1, GNB2 and GNB3. May be involved in selected striatal competencies, mainly locomotor activity and motor coordination. In Mus musculus (Mouse), this protein is GTP-binding protein Rhes (Rasd2).